The chain runs to 387 residues: Cysteine desulfurase (387 aa).

Pyridoxal 5'-phosphate-binding positions include 72–73 (GT), N152, Q180, and 200–202 (SAH). K203 bears the N6-(pyridoxal phosphate)lysine mark. Residue T238 coordinates pyridoxal 5'-phosphate. Catalysis depends on C326, which acts as the Cysteine persulfide intermediate. Position 326 (C326) interacts with [2Fe-2S] cluster.

Belongs to the class-V pyridoxal-phosphate-dependent aminotransferase family. NifS/IscS subfamily. In terms of assembly, homodimer. Pyridoxal 5'-phosphate serves as cofactor.

The enzyme catalyses (sulfur carrier)-H + L-cysteine = (sulfur carrier)-SH + L-alanine. Functionally, catalyzes the removal of elemental sulfur atoms from cysteine to produce alanine. Seems to participate in the biosynthesis of the nitrogenase metalloclusters by providing the inorganic sulfur required for the Fe-S core formation. The chain is Cysteine desulfurase from Sinorhizobium fredii (strain NBRC 101917 / NGR234).